We begin with the raw amino-acid sequence, 389 residues long: Lipid-A-disaccharide synthase (389 aa).

The protein belongs to the LpxB family.

It carries out the reaction a lipid X + a UDP-2-N,3-O-bis[(3R)-3-hydroxyacyl]-alpha-D-glucosamine = a lipid A disaccharide + UDP + H(+). Its pathway is bacterial outer membrane biogenesis; LPS lipid A biosynthesis. Its function is as follows. Condensation of UDP-2,3-diacylglucosamine and 2,3-diacylglucosamine-1-phosphate to form lipid A disaccharide, a precursor of lipid A, a phosphorylated glycolipid that anchors the lipopolysaccharide to the outer membrane of the cell. This is Lipid-A-disaccharide synthase from Burkholderia multivorans (strain ATCC 17616 / 249).